Consider the following 201-residue polypeptide: LexA repressor 1 (201 aa).

A DNA-binding region (H-T-H motif) is located at residues 27–47 (LAEIAQAFGFASRNAAQKHVQ). Residues S122 and K159 each act as for autocatalytic cleavage activity in the active site.

The protein belongs to the peptidase S24 family. As to quaternary structure, homodimer.

It catalyses the reaction Hydrolysis of Ala-|-Gly bond in repressor LexA.. Functionally, represses a number of genes involved in the response to DNA damage (SOS response), including recA and lexA. In the presence of single-stranded DNA, RecA interacts with LexA causing an autocatalytic cleavage which disrupts the DNA-binding part of LexA, leading to derepression of the SOS regulon and eventually DNA repair. The sequence is that of LexA repressor 1 from Xanthomonas campestris pv. campestris (strain ATCC 33913 / DSM 3586 / NCPPB 528 / LMG 568 / P 25).